The primary structure comprises 93 residues: Cell division protein FtsB (93 aa).

The Cytoplasmic segment spans residues methionine 1–leucine 3. A helical membrane pass occupies residues phenylalanine 4–phenylalanine 21. The Periplasmic segment spans residues glycine 22–arginine 93. Positions aspartate 28 to glutamate 76 form a coiled coil.

It belongs to the FtsB family. As to quaternary structure, part of a complex composed of FtsB, FtsL and FtsQ.

It localises to the cell inner membrane. Functionally, essential cell division protein. May link together the upstream cell division proteins, which are predominantly cytoplasmic, with the downstream cell division proteins, which are predominantly periplasmic. The polypeptide is Cell division protein FtsB (Histophilus somni (strain 129Pt) (Haemophilus somnus)).